A 96-amino-acid polypeptide reads, in one-letter code: UPF0235 protein Shewmr4_1190 (96 aa).

The protein belongs to the UPF0235 family.

In Shewanella sp. (strain MR-4), this protein is UPF0235 protein Shewmr4_1190.